The primary structure comprises 127 residues: Biogenesis of lysosome-related organelles complex 1 subunit 2 (127 aa).

It belongs to the BLOC1S2 family. As to quaternary structure, component of the biogenesis of lysosome-related organelles complex-1 (BLOC-1). Interacts with BLOS1 and SNX1.

Its subcellular location is the cytoplasm. The protein localises to the endosome. Functionally, component of the biogenesis of lysosome-related organelles complex-1 (BLOC-1), a complex that mediates the vacuolar degradative transport via the intracellular vesicle trafficking from the endosome to the vacuole. The sequence is that of Biogenesis of lysosome-related organelles complex 1 subunit 2 (BLOS2) from Arabidopsis thaliana (Mouse-ear cress).